A 139-amino-acid polypeptide reads, in one-letter code: D-ribose pyranase (139 aa).

The active-site Proton donor is His20. Substrate is bound by residues Asp28, His106, and Tyr128 to Asn130.

The protein belongs to the RbsD / FucU family. RbsD subfamily. In terms of assembly, homodecamer.

It is found in the cytoplasm. It carries out the reaction beta-D-ribopyranose = beta-D-ribofuranose. It functions in the pathway carbohydrate metabolism; D-ribose degradation; D-ribose 5-phosphate from beta-D-ribopyranose: step 1/2. In terms of biological role, catalyzes the interconversion of beta-pyran and beta-furan forms of D-ribose. In Salmonella paratyphi B (strain ATCC BAA-1250 / SPB7), this protein is D-ribose pyranase.